Consider the following 620-residue polypeptide: Carotenoid isomerooxygenase (620 aa).

Fe cation contacts are provided by His-211, His-267, and His-337. The tract at residues Asn-440–Arg-459 is disordered. Basic and acidic residues predominate over residues Glu-449–Arg-459. His-612 is a Fe cation binding site.

Belongs to the carotenoid oxygenase family. The cofactor is Fe(2+). As to expression, expression follows organogenesis of the larval Bolwig's organ (BO), which mediates larval photophobic behavior. In the adult, expression is restricted exclusively to the brain. Expressed in both neuronal cells and glia cells. Not active within photoreceptors. Active within neuronal cells within the central nervous system.

The catalysed reaction is all-trans-zeaxanthin + O2 = (3R)-11-cis-3-hydroxyretinal + (3R)-all-trans-3-hydroxyretinal. The protein operates within cofactor metabolism; retinol metabolism. Catalyzes the oxidative cleavage at the 15,15'-double bond of carotenoids and the simultaneous all-trans to 11-cis isomerization of one cleavage product. Carotenoids like 11-cis retinal can promote visual pigment biogenesis in the dark. Essential for the biosynthesis of the 3-hydroxyretinal chromophore of rhodopsin from zeaxanthin and for proper photoreceptor development. Also essential for larval light perception. The chain is Carotenoid isomerooxygenase (ninaB) from Drosophila melanogaster (Fruit fly).